Reading from the N-terminus, the 406-residue chain is UPF0754 membrane protein SYNPCC7002_A1087 (406 aa).

A helical transmembrane segment spans residues 384–404 (IVNLGGVLGFLVGVAQSVILL).

Belongs to the UPF0754 family.

It is found in the cell inner membrane. This chain is UPF0754 membrane protein SYNPCC7002_A1087, found in Picosynechococcus sp. (strain ATCC 27264 / PCC 7002 / PR-6) (Agmenellum quadruplicatum).